A 320-amino-acid polypeptide reads, in one-letter code: Olfactory receptor 10J1 (320 aa).

The Extracellular segment spans residues 1–36; the sequence is MLLCFRFGNQSMKRENFTLITDFVFQGFSSFHEQQI. N-linked (GlcNAc...) asparagine glycans are attached at residues Asn9 and Asn16. A helical membrane pass occupies residues 37 to 57; the sequence is TLFGVFLALYILTLAGNIIIV. Residues 58-65 are Cytoplasmic-facing; sequence TIIRMDLH. A helical membrane pass occupies residues 66–86; that stretch reads LHTPMYFFLSMLSTSETVYTL. The Extracellular segment spans residues 87-110; that stretch reads VILPRMLSSLVGMSQPISLAGCAT. Cys108 and Cys199 are disulfide-bonded. Residues 111–131 form a helical membrane-spanning segment; it reads QMFFFVTFGITNCFLLTAMGY. Over 132–150 the chain is Cytoplasmic; it reads DRYVAICNPLRYMVIMNKR. The chain crosses the membrane as a helical span at residues 151 to 171; the sequence is LRIQLVLGACSIGLIVAITQV. The Extracellular segment spans residues 172-207; the sequence is TSVFRLPFCARKVPHFFCDIRPVMKLSCIDTTVNEI. Residues 208 to 227 traverse the membrane as a helical segment; the sequence is LTLIISVLVLVVPMGLVFIS. At 228–247 the chain is on the cytoplasmic side; it reads YVLIISTILKIASVEGRKKA. Residues 248-268 traverse the membrane as a helical segment; the sequence is FATCASHLTVVIVHYSCASIA. Topologically, residues 269-281 are extracellular; it reads YLKPKSENTREHD. A helical transmembrane segment spans residues 282 to 302; it reads QLISVTYTVITPLLNPVVYTL. Topologically, residues 303 to 320 are cytoplasmic; the sequence is RNKEVKDALCRAVGGKFS.

This sequence belongs to the G-protein coupled receptor 1 family.

Its subcellular location is the cell membrane. Its function is as follows. Odorant receptor. The protein is Olfactory receptor 10J1 (OR10J1) of Homo sapiens (Human).